Here is an 869-residue protein sequence, read N- to C-terminus: Eukaryotic translation initiation factor 3 subunit C (869 aa).

Disordered regions lie at residues 1-92 (MSRF…KSAK) and 182-242 (IKKA…VGKG). Acidic residues predominate over residues 14–55 (SSDEEEDLYSDDEEVQEQPEEESSEDDSEEDDDDDDDSDSSS). Basic and acidic residues predominate over residues 185–203 (ASKEHQKDIDSFRADKDAY). Residues 607–781 (FHMHINLELL…SSIIFRKGVE (175 aa)) form the PCI domain. Residues 803-869 (NERTLETRTQ…ALGAAVGSRA (67 aa)) are disordered. Residues 823 to 843 (GRGGRGGNRGGRGGGRGGRGG) show a composition bias toward gly residues.

This sequence belongs to the eIF-3 subunit C family. As to quaternary structure, component of the eukaryotic translation initiation factor 3 (eIF-3) complex.

It localises to the cytoplasm. In terms of biological role, component of the eukaryotic translation initiation factor 3 (eIF-3) complex, which is involved in protein synthesis of a specialized repertoire of mRNAs and, together with other initiation factors, stimulates binding of mRNA and methionyl-tRNAi to the 40S ribosome. The eIF-3 complex specifically targets and initiates translation of a subset of mRNAs involved in cell proliferation. This chain is Eukaryotic translation initiation factor 3 subunit C (nip1), found in Botryotinia fuckeliana (strain B05.10) (Noble rot fungus).